The following is a 351-amino-acid chain: D-threonate 4-phosphate dehydrogenase (351 aa).

Substrate-binding residues include His147 and Thr148. A divalent metal cation is bound by residues His177, His221, and His276. Substrate contacts are provided by Lys284, Asn293, and Arg302.

It belongs to the PdxA family. PdxA2 subfamily. Homodimer. Requires a divalent metal cation as cofactor.

The catalysed reaction is 4-O-phospho-D-threonate + NAD(+) = dihydroxyacetone phosphate + CO2 + NADH. Its function is as follows. Catalyzes the NAD-dependent oxidation and subsequent decarboxylation of D-threonate 4-phosphate to produce dihydroxyacetone phosphate (DHAP). Can also use 4-hydroxy-L-threonine 4-phosphate as substrate. This chain is D-threonate 4-phosphate dehydrogenase, found in Bordetella bronchiseptica (strain ATCC BAA-588 / NCTC 13252 / RB50) (Alcaligenes bronchisepticus).